The chain runs to 155 residues: Putative pre-16S rRNA nuclease (155 aa).

The segment at 136-155 (DAERATSRPPGHPVEPRIGP) is disordered.

Belongs to the YqgF nuclease family.

It localises to the cytoplasm. In terms of biological role, could be a nuclease involved in processing of the 5'-end of pre-16S rRNA. The polypeptide is Putative pre-16S rRNA nuclease (Leifsonia xyli subsp. xyli (strain CTCB07)).